We begin with the raw amino-acid sequence, 189 residues long: UPF0398 protein lp_1753 (189 aa).

It belongs to the UPF0398 family.

This Lactiplantibacillus plantarum (strain ATCC BAA-793 / NCIMB 8826 / WCFS1) (Lactobacillus plantarum) protein is UPF0398 protein lp_1753.